Reading from the N-terminus, the 370-residue chain is tRNA (guanine(9)-/adenine(9)-N1)-methyltransferase (370 aa).

An SAM-dependent MTase TRM10-type domain is found at 87 to 292 (TPEELREKLP…KELPKRATRY (206 aa)).

It belongs to the class IV-like SAM-binding methyltransferase superfamily. TRM10 family.

The protein localises to the cytoplasm. It catalyses the reaction adenosine(9) in tRNA + S-adenosyl-L-methionine = N(1)-methyladenosine(9) in tRNA + S-adenosyl-L-homocysteine + H(+). The catalysed reaction is guanosine(9) in tRNA + S-adenosyl-L-methionine = N(1)-methylguanosine(9) in tRNA + S-adenosyl-L-homocysteine + H(+). In terms of biological role, catalyzes the S-adenosyl-L-methionine-dependent formation of either N(1)-methyladenine or N(1)-methylguanine at position 9 (m1A9 or m1G9) in tRNA. This Thermococcus kodakarensis (strain ATCC BAA-918 / JCM 12380 / KOD1) (Pyrococcus kodakaraensis (strain KOD1)) protein is tRNA (guanine(9)-/adenine(9)-N1)-methyltransferase.